Consider the following 393-residue polypeptide: Inulin fructotransferase [DFA-I-forming] (393 aa).

The enzyme catalyses Produces alpha-D-fructofuranose beta-D-fructofuranose 1,2':2,1'-dianhydride (DFA I) by successively eliminating the diminishing (2-&gt;1)-beta-D-fructan (inulin) chain from the terminal D-fructosyl-D-fructosyl disaccharide.. This Arthrobacter globiformis protein is Inulin fructotransferase [DFA-I-forming].